A 257-amino-acid chain; its full sequence is Isoprenyl transferase (257 aa).

Asp34 is a catalytic residue. Asp34 is a Mg(2+) binding site. Substrate contacts are provided by residues 35 to 38, Trp39, Arg47, His51, and 79 to 81; these read GNGR and STE. Asn82 (proton acceptor) is an active-site residue. Substrate is bound by residues Trp83, Arg85, Arg202, and 208–210; that span reads RLS. Glu221 provides a ligand contact to Mg(2+).

The protein belongs to the UPP synthase family. Homodimer. It depends on Mg(2+) as a cofactor.

Catalyzes the condensation of isopentenyl diphosphate (IPP) with allylic pyrophosphates generating different type of terpenoids. The protein is Isoprenyl transferase of Geobacillus kaustophilus (strain HTA426).